Consider the following 373-residue polypeptide: Dual-specificity RNA methyltransferase RlmN (373 aa).

Catalysis depends on Glu94, which acts as the Proton acceptor. Residues 100-339 form the Radical SAM core domain; the sequence is EDDRATLCVS…VIVRKTRGDD (240 aa). Cys107 and Cys344 form a disulfide bridge. Residues Cys114, Cys118, and Cys121 each coordinate [4Fe-4S] cluster. S-adenosyl-L-methionine is bound by residues 168-169, Ser200, 222-224, and Asn301; these read GE and SIH. Cys344 (S-methylcysteine intermediate) is an active-site residue.

This sequence belongs to the radical SAM superfamily. RlmN family. The cofactor is [4Fe-4S] cluster.

It localises to the cytoplasm. The catalysed reaction is adenosine(2503) in 23S rRNA + 2 reduced [2Fe-2S]-[ferredoxin] + 2 S-adenosyl-L-methionine = 2-methyladenosine(2503) in 23S rRNA + 5'-deoxyadenosine + L-methionine + 2 oxidized [2Fe-2S]-[ferredoxin] + S-adenosyl-L-homocysteine. It carries out the reaction adenosine(37) in tRNA + 2 reduced [2Fe-2S]-[ferredoxin] + 2 S-adenosyl-L-methionine = 2-methyladenosine(37) in tRNA + 5'-deoxyadenosine + L-methionine + 2 oxidized [2Fe-2S]-[ferredoxin] + S-adenosyl-L-homocysteine. Its function is as follows. Specifically methylates position 2 of adenine 2503 in 23S rRNA and position 2 of adenine 37 in tRNAs. m2A2503 modification seems to play a crucial role in the proofreading step occurring at the peptidyl transferase center and thus would serve to optimize ribosomal fidelity. The polypeptide is Dual-specificity RNA methyltransferase RlmN (Shewanella baltica (strain OS155 / ATCC BAA-1091)).